The following is a 410-amino-acid chain: Diguanylate cyclase DgcM (410 aa).

PAS domains lie at 3–70 (THNF…NQHD) and 129–198 (GFYA…HLPG). Residues 199 to 251 (GHKPLNFIHKLADGSTRHVQTYAGPIEIYGDKLMLCIVHDITEQKRLEEQLEH) enclose the PAC domain. Positions 283–410 (QDYSLLLIDT…NDGRNRVLAA (128 aa)) constitute a GGDEF domain. Aspartate 291 contacts Mg(2+). The substrate site is built by asparagine 299, histidine 304, and aspartate 308. Glutamate 334 is a Mg(2+) binding site. Glutamate 334 serves as the catalytic Proton acceptor.

The cofactor is Mg(2+).

The enzyme catalyses 2 GTP = 3',3'-c-di-GMP + 2 diphosphate. It functions in the pathway purine metabolism; 3',5'-cyclic di-GMP biosynthesis. In terms of biological role, part of a signaling cascade that regulates curli biosynthesis. The cascade is composed of two cyclic-di-GMP (c-di-GMP) control modules, in which c-di-GMP controlled by the DgcE/PdeH pair (module I) regulates the activity of the DgcM/PdeR pair (module II), which in turn regulates activity of the transcription factor MlrA and expression of the master biofilm regulator csgD. In Escherichia coli O157:H7, this protein is Diguanylate cyclase DgcM.